The primary structure comprises 506 residues: Maturase K (506 aa).

The protein belongs to the intron maturase 2 family. MatK subfamily.

Its subcellular location is the plastid. The protein localises to the chloroplast. Its function is as follows. Usually encoded in the trnK tRNA gene intron. Probably assists in splicing its own and other chloroplast group II introns. The sequence is that of Maturase K from Jasminum nudiflorum (Winter jasmine).